The sequence spans 169 residues: uncharacterized protein (169 aa).

The next 2 helical transmembrane spans lie at 62 to 84 (RWGF…LLGL) and 94 to 116 (ALML…YWWF).

The protein resides in the cell membrane. This is an uncharacterized protein from Archaeoglobus fulgidus (strain ATCC 49558 / DSM 4304 / JCM 9628 / NBRC 100126 / VC-16).